We begin with the raw amino-acid sequence, 89 residues long: Large ribosomal subunit protein eL34 (89 aa).

The disordered stretch occupies residues 41-69 (RPLNGVPRGRPSELRKLPKTAKRPERPYP). Residues 50 to 66 (RPSELRKLPKTAKRPER) are compositionally biased toward basic and acidic residues.

Belongs to the eukaryotic ribosomal protein eL34 family.

This is Large ribosomal subunit protein eL34 from Thermococcus gammatolerans (strain DSM 15229 / JCM 11827 / EJ3).